Here is a 110-residue protein sequence, read N- to C-terminus: Tyrosine-protein phosphatase 3 (110 aa).

In terms of domain architecture, Tyrosine-protein phosphatase spans 1 to 110; sequence QKCATIVMVT…NPPHSGPIVV (110 aa). D80 is a substrate binding site.

Belongs to the protein-tyrosine phosphatase family.

The catalysed reaction is O-phospho-L-tyrosyl-[protein] + H2O = L-tyrosyl-[protein] + phosphate. In Styela plicata (Wrinkled sea squirt), this protein is Tyrosine-protein phosphatase 3 (STY-3).